The chain runs to 236 residues: uncharacterized protein (236 aa).

Residues 7-74 (RTNRRDIYLK…PKIGSFVSRV (68 aa)) enclose the HTH gntR-type domain. The H-T-H motif DNA-binding region spans 34 to 53 (ENELAASMGVSRTPVRESLI).

This is an uncharacterized protein from Streptomyces ambofaciens.